We begin with the raw amino-acid sequence, 50 residues long: Large ribosomal subunit protein eL39 (50 aa).

This sequence belongs to the eukaryotic ribosomal protein eL39 family. In terms of assembly, part of the 50S ribosomal subunit. Interacts weakly with protein L23.

In terms of biological role, binds to the 23S rRNA. Forms part of the polypeptide exit tunnel. The polypeptide is Large ribosomal subunit protein eL39 (rpl39e) (Haloarcula marismortui (strain ATCC 43049 / DSM 3752 / JCM 8966 / VKM B-1809) (Halobacterium marismortui)).